Consider the following 209-residue polypeptide: Large ribosomal subunit protein uL3 (209 aa).

Residues 141–163 (RAVGSMGASSDPSRTFKNKRMPG) form a disordered region.

The protein belongs to the universal ribosomal protein uL3 family. In terms of assembly, part of the 50S ribosomal subunit. Forms a cluster with proteins L14 and L19.

Its function is as follows. One of the primary rRNA binding proteins, it binds directly near the 3'-end of the 23S rRNA, where it nucleates assembly of the 50S subunit. This Clostridium botulinum (strain ATCC 19397 / Type A) protein is Large ribosomal subunit protein uL3.